The chain runs to 902 residues: Mitochondrial aspartate-glutamate transporter AGC1 (902 aa).

Solcar repeat units lie at residues 528–614, 622–710, and 725–813; these read FDSL…MRNR, LSLF…LKKD, and LKTW…FKGF. 6 helical membrane-spanning segments follow: residues 534–554, 591–611, 622–642, 681–702, 731–751, and 786–806; these read FSLG…IDFI, GPQL…NDFM, LSLF…VIFT, GLYN…IYFP, LTAG…FDVI, and FKGG…TLAA.

It belongs to the mitochondrial carrier (TC 2.A.29) family.

It is found in the mitochondrion inner membrane. In terms of biological role, calcium-dependent mitochondrial aspartate and glutamate carrier. Transport of glutamate in mitochondria is required for mitochondrial transamination reactions and ornithine synthesis. Plays also a role in malate-aspartate NADH shuttle, which is critical for growth on acetate and fatty acids. This chain is Mitochondrial aspartate-glutamate transporter AGC1 (AGC1), found in Saccharomyces cerevisiae (strain ATCC 204508 / S288c) (Baker's yeast).